Here is a 66-residue protein sequence, read N- to C-terminus: Putative alpha-neurotoxin RjAa16 (66 aa).

Residues 1–60 (KEGYPVDWGNCKYECMSDAYCKDLCVDRKAKSGYCYKLNWFCYCEGLPDDSPIKTNGHCR) form the LCN-type CS-alpha/beta domain. Intrachain disulfides connect Cys-11–Cys-59, Cys-15–Cys-35, Cys-21–Cys-42, and Cys-25–Cys-44.

The protein belongs to the long (4 C-C) scorpion toxin superfamily. Sodium channel inhibitor family. Alpha subfamily. In terms of tissue distribution, expressed by the venom gland.

The protein localises to the secreted. Functionally, alpha toxins bind voltage-independently at site-3 of sodium channels (Nav) and inhibits the inactivation of the activated channels, thereby blocking neuronal transmission. The polypeptide is Putative alpha-neurotoxin RjAa16 (Rhopalurus junceus (Caribbean blue scorpion)).